A 660-amino-acid polypeptide reads, in one-letter code: uncharacterized protein (660 aa).

Positions Met1–Arg660 are disordered. Gly residues predominate over residues Arg67–Arg80. Over residues Ser104–Ser116 the composition is skewed to polar residues. Repeat copies occupy residues Ser149–Arg273, Ser274–Arg398, Ser399–Arg523, and Ser524–Arg648. The interval Ser149 to Arg648 is 4 X 125 AA tandem repeats. 4 stretches are compositionally biased toward low complexity: residues Arg177–Ala196, Arg302–Ala321, Arg427–Ala446, and Arg552–Ala571.

This is an uncharacterized protein from Homo sapiens (Human).